The sequence spans 171 residues: S-ribosylhomocysteine lyase (171 aa).

Fe cation-binding residues include His54, His58, and Cys128.

It belongs to the LuxS family. As to quaternary structure, homodimer. The cofactor is Fe cation.

The catalysed reaction is S-(5-deoxy-D-ribos-5-yl)-L-homocysteine = (S)-4,5-dihydroxypentane-2,3-dione + L-homocysteine. In terms of biological role, involved in the synthesis of autoinducer 2 (AI-2) which is secreted by bacteria and is used to communicate both the cell density and the metabolic potential of the environment. The regulation of gene expression in response to changes in cell density is called quorum sensing. Catalyzes the transformation of S-ribosylhomocysteine (RHC) to homocysteine (HC) and 4,5-dihydroxy-2,3-pentadione (DPD). In Citrobacter koseri (strain ATCC BAA-895 / CDC 4225-83 / SGSC4696), this protein is S-ribosylhomocysteine lyase.